An 83-amino-acid chain; its full sequence is U5-theraphotoxin-Hs1a 6 (83 aa).

The signal sequence occupies residues Met-1–Ala-21. Positions Ser-22–Arg-49 are excised as a propeptide. Disulfide bonds link Cys-51/Cys-63, Cys-56/Cys-68, and Cys-62/Cys-75.

The protein belongs to the neurotoxin 10 (Hwtx-1) family. 51 (Hntx-8) subfamily. Hntx-8 sub-subfamily. In terms of tissue distribution, expressed by the venom gland.

Its subcellular location is the secreted. Functionally, agglutinates erythrocytes. This chain is U5-theraphotoxin-Hs1a 6, found in Cyriopagopus schmidti (Chinese bird spider).